Consider the following 254-residue polypeptide: Protein EFFECTOR OF TRANSCRIPTION 3 (254 aa).

Residues 103 to 152 (RCTGLYELGVGVIGQDQGQNFDPDNNVLGVYVGQCVDVKSRLQDYGRRGG) form the GIY-YIG domain.

Its subcellular location is the cytoplasm. The polypeptide is Protein EFFECTOR OF TRANSCRIPTION 3 (Arabidopsis thaliana (Mouse-ear cress)).